Reading from the N-terminus, the 238-residue chain is Large ribosomal subunit protein uL1 (238 aa).

This sequence belongs to the universal ribosomal protein uL1 family. As to quaternary structure, part of the 50S ribosomal subunit.

Functionally, binds directly to 23S rRNA. The L1 stalk is quite mobile in the ribosome, and is involved in E site tRNA release. Its function is as follows. Protein L1 is also a translational repressor protein, it controls the translation of the L11 operon by binding to its mRNA. The protein is Large ribosomal subunit protein uL1 of Gloeobacter violaceus (strain ATCC 29082 / PCC 7421).